The chain runs to 490 residues: Betaine aldehyde dehydrogenase (490 aa).

Residues S26, I27, and D93 each coordinate K(+). An NAD(+)-binding site is contributed by 150–152; sequence GAW. The active-site Charge relay system is K162. 176-179 contributes to the NAD(+) binding site; the sequence is KPSE. Position 180 (V180) interacts with K(+). 230–233 contacts NAD(+); it reads GTVT. K(+) is bound at residue L246. The active-site Proton acceptor is E252. The NAD(+) site is built by G254, C286, and E387. C286 acts as the Nucleophile in catalysis. C286 is modified (cysteine sulfenic acid (-SOH)). K(+) is bound by residues K457 and G460. The active-site Charge relay system is E464.

This sequence belongs to the aldehyde dehydrogenase family. In terms of assembly, dimer of dimers. K(+) is required as a cofactor.

It catalyses the reaction betaine aldehyde + NAD(+) + H2O = glycine betaine + NADH + 2 H(+). It participates in amine and polyamine biosynthesis; betaine biosynthesis via choline pathway; betaine from betaine aldehyde: step 1/1. Functionally, involved in the biosynthesis of the osmoprotectant glycine betaine. Catalyzes the irreversible oxidation of betaine aldehyde to the corresponding acid. This Ectopseudomonas mendocina (strain ymp) (Pseudomonas mendocina) protein is Betaine aldehyde dehydrogenase.